The following is a 487-amino-acid chain: N-succinylglutamate 5-semialdehyde dehydrogenase (487 aa).

Position 221–226 (221–226) interacts with NAD(+); that stretch reads GSSDTG. Residues Glu244 and Cys278 contribute to the active site.

Belongs to the aldehyde dehydrogenase family. AstD subfamily.

The catalysed reaction is N-succinyl-L-glutamate 5-semialdehyde + NAD(+) + H2O = N-succinyl-L-glutamate + NADH + 2 H(+). It participates in amino-acid degradation; L-arginine degradation via AST pathway; L-glutamate and succinate from L-arginine: step 4/5. Functionally, catalyzes the NAD-dependent reduction of succinylglutamate semialdehyde into succinylglutamate. The protein is N-succinylglutamate 5-semialdehyde dehydrogenase of Burkholderia lata (strain ATCC 17760 / DSM 23089 / LMG 22485 / NCIMB 9086 / R18194 / 383).